The primary structure comprises 671 residues: Probable potassium transport system protein Kup 2 (671 aa).

Helical transmembrane passes span 18–38, 60–80, 103–123, 149–169, 173–193, 218–238, 252–272, 292–312, 343–363, 373–393, 402–422, and 424–444; these read GFLI…LYAM, VSLV…LIAL, WLIV…ALTP, VTTL…ASLV, FGPI…INSF, AGFF…ALYS, WPFV…WLLA, MVIY…QALI, LYIP…VLYF, YSLA…YFLI, IAFI…ASLV, and FING…VMFI.

The protein belongs to the HAK/KUP transporter (TC 2.A.72) family.

The protein localises to the cell membrane. It carries out the reaction K(+)(in) + H(+)(in) = K(+)(out) + H(+)(out). Transport of potassium into the cell. Likely operates as a K(+):H(+) symporter. The protein is Probable potassium transport system protein Kup 2 of Lactococcus lactis subsp. cremoris (strain MG1363).